Reading from the N-terminus, the 80-residue chain is U20-ctenitoxin-Pn1a (80 aa).

Intrachain disulfides connect C3–C20, C10–C26, C17–C52, C19–C40, C28–C38, C58–C71, and C75–C80.

As to expression, expressed by the venom gland.

It is found in the secreted. Omega-agatoxin are antagonists of voltage-gated calcium channels (Cav). Induces rapid general flaccid paralysis followed by death when injected into the cerebral ventricle of mice at dose levels of 3 ug per mouse. The chain is U20-ctenitoxin-Pn1a from Phoneutria nigriventer (Brazilian armed spider).